Reading from the N-terminus, the 154-residue chain is UPF0178 protein YaiI (154 aa).

This sequence belongs to the UPF0178 family.

The chain is UPF0178 protein YaiI from Escherichia coli (strain ATCC 8739 / DSM 1576 / NBRC 3972 / NCIMB 8545 / WDCM 00012 / Crooks).